The primary structure comprises 160 residues: Large ribosomal subunit protein uL13 (160 aa).

This sequence belongs to the universal ribosomal protein uL13 family. As to quaternary structure, part of the 50S ribosomal subunit.

In terms of biological role, this protein is one of the early assembly proteins of the 50S ribosomal subunit, although it is not seen to bind rRNA by itself. It is important during the early stages of 50S assembly. The polypeptide is Large ribosomal subunit protein uL13 (Orientia tsutsugamushi (strain Ikeda) (Rickettsia tsutsugamushi)).